The primary structure comprises 896 residues: Putative mannosylglycerate hydrolase (896 aa).

A divalent metal cation is bound by residues H12, D14, D125, and H348. D125 (nucleophile) is an active-site residue.

The protein belongs to the glycosyl hydrolase 38 family. A divalent metal cation is required as a cofactor.

It carries out the reaction (2R)-2-O-(6-phospho-alpha-D-mannosyl)-glycerate + H2O = alpha-D-mannose 6-phosphate + (R)-glycerate. Its function is as follows. May hydrolyze 6-phospho-mannosyl-D-glycerate to mannose-6-phosphate and glycerate. In Halalkalibacterium halodurans (strain ATCC BAA-125 / DSM 18197 / FERM 7344 / JCM 9153 / C-125) (Bacillus halodurans), this protein is Putative mannosylglycerate hydrolase (mngB).